The sequence spans 162 residues: Nucleotide-binding protein Mpe_A3039 (162 aa).

The protein belongs to the YajQ family.

Its function is as follows. Nucleotide-binding protein. This Methylibium petroleiphilum (strain ATCC BAA-1232 / LMG 22953 / PM1) protein is Nucleotide-binding protein Mpe_A3039.